A 336-amino-acid chain; its full sequence is Ketol-acid reductoisomerase (NADP(+)) (336 aa).

A KARI N-terminal Rossmann domain is found at M1–T181. Residues Y24 to Q27, R47, S50, and S52 contribute to the NADP(+) site. H107 is an active-site residue. NADP(+) is bound at residue G133. The region spanning S182 to I327 is the KARI C-terminal knotted domain. Residues D190, E194, E226, and E230 each contribute to the Mg(2+) site. S251 is a binding site for substrate.

Belongs to the ketol-acid reductoisomerase family. The cofactor is Mg(2+).

The enzyme catalyses (2R)-2,3-dihydroxy-3-methylbutanoate + NADP(+) = (2S)-2-acetolactate + NADPH + H(+). It catalyses the reaction (2R,3R)-2,3-dihydroxy-3-methylpentanoate + NADP(+) = (S)-2-ethyl-2-hydroxy-3-oxobutanoate + NADPH + H(+). The protein operates within amino-acid biosynthesis; L-isoleucine biosynthesis; L-isoleucine from 2-oxobutanoate: step 2/4. Its pathway is amino-acid biosynthesis; L-valine biosynthesis; L-valine from pyruvate: step 2/4. Functionally, involved in the biosynthesis of branched-chain amino acids (BCAA). Catalyzes an alkyl-migration followed by a ketol-acid reduction of (S)-2-acetolactate (S2AL) to yield (R)-2,3-dihydroxy-isovalerate. In the isomerase reaction, S2AL is rearranged via a Mg-dependent methyl migration to produce 3-hydroxy-3-methyl-2-ketobutyrate (HMKB). In the reductase reaction, this 2-ketoacid undergoes a metal-dependent reduction by NADPH to yield (R)-2,3-dihydroxy-isovalerate. The chain is Ketol-acid reductoisomerase (NADP(+)) from Halorhodospira halophila (strain DSM 244 / SL1) (Ectothiorhodospira halophila (strain DSM 244 / SL1)).